A 212-amino-acid chain; its full sequence is Large ribosomal subunit protein uL3 (212 aa).

The interval 147–166 is disordered; that stretch reads GSTGQNQSPGKVFKGKKMPG. Position 153 is an N5-methylglutamine (glutamine 153).

The protein belongs to the universal ribosomal protein uL3 family. Part of the 50S ribosomal subunit. Forms a cluster with proteins L14 and L19. Methylated by PrmB.

One of the primary rRNA binding proteins, it binds directly near the 3'-end of the 23S rRNA, where it nucleates assembly of the 50S subunit. The protein is Large ribosomal subunit protein uL3 of Psychrobacter sp. (strain PRwf-1).